Here is an 873-residue protein sequence, read N- to C-terminus: MKQIPLILAMSLAFAAAAKGESAPDMQAAVNFDSAMLWGGANGADLSRFNYSNALRPGNYIVDIYANNYPLIRQQVRFVAAQTSGQGLKTAPAVACFTYGQLEAMQVRLRALDPALVADLKSSGRCEVLGKLFPDSRESFDFGENRLEVSIPQAYTINRFRRDISPDEWDSGITAFRLGYQYNYADYIGGLRAGRRLDLNLYSGFNFKGWYLRNSSTLGWGQGRFTRRSQRTSLQTDIPSWRARLVFGDVFSSGEYFAPYSMRGMLVGSDTAMLPYSERLYRPTIRGVARTRANVKVYQAGVLVFQDAVPPGPFAIDDYSPASYGGDLRVVVTEANGAVQTFTVPYASAVRLILPGQTQWSFSAGRYRNYRNDGQDRPWVTQLTGRHGVADGVNLYGGLLIAQAYQAGLAGLSWNTPWGAMAADATLSRSQLSTTGNANGSSLRFSYSKTLSGTNTAIRLATLRYSSSGFWNFADAVNAGPVETNGRNGRFGLYSLLGRERPRGDFSVTLSQPLGGYGSLYVSALRRTYWGSSRVDQQTQLGYSTQVGRVGVNLDVSRTENRRSTEHQVMLNLSIPLYGATSSGVVTGSLARTGSAPVQQSVNYSGMSGERDQYTYGLGVQRAGTSAQYALNGSWSGTYGEVSGQLTHGRSYSQYQINGSGGLVAHAGGVTFGQYQAGTIGLIQAEAAAGAKVVNTRNAAVDRSGYGLVSLTPYSLNEVELSPQDLPLDVQLESTVEQVIPRAGAVVALRFPTRHDVAAMLVAEPGSEGALVFGTEVRDGAGKVVGVAGQGASALVRGVSASGTLEVTRADGSICRATYDLKSAGQAVHGLPRIALACAPQGGGERGARAAGQAVAQPSAISISGKDHEPDIR.

A signal peptide spans 1-15 (MKQIPLILAMSLAFA). Cys815 and Cys838 are joined by a disulfide.

The protein belongs to the fimbrial export usher family.

The protein resides in the cell outer membrane. Probable porin-like protein necessary for the assembly of a pilin-type protein. The sequence is that of Outer membrane usher protein FimC (fimC) from Bordetella pertussis (strain Tohama I / ATCC BAA-589 / NCTC 13251).